The chain runs to 863 residues: Ubiquitin carboxyl-terminal hydrolase 13 (863 aa).

Phosphoserine; by AURKB is present on Ser114. Thr122 is modified (phosphothreonine). The UBP-type; degenerate zinc-finger motif lies at 187-295 (PVSKYANNLT…KHLAHFGIDM (109 aa)). The Zn(2+) site is built by Cys211, Cys214, Cys231, and His244. Lys311 participates in a covalent cross-link: Glycyl lysine isopeptide (Lys-Gly) (interchain with G-Cter in SUMO2). The region spanning 336 to 861 (TGLKNLGNSC…LGYMYFYRRI (526 aa)) is the USP domain. Cys345 serves as the catalytic Nucleophile. Residue Lys405 forms a Glycyl lysine isopeptide (Lys-Gly) (interchain with G-Cter in SUMO2) linkage. 2 UBA domains span residues 652–693 (DIDE…IIVH) and 727–767 (QPPE…IFSH). The active-site Proton acceptor is the His823.

This sequence belongs to the peptidase C19 family. In terms of assembly, interacts with UFD1. Interacts (via UBA domains) with SIAH2 (when ubiquitinated). Interacts with BAG6; the interaction is direct and may mediate UBL4A deubiquitination. Interacts (via UBA 2 domain) with AMFR; the interaction is direct. Interacts with UBL4A; may be indirect via BAG6. Interacts with NEDD4. Post-translationally, phosphorylated by AURKB at Ser-114; leading to stabilization of cell cycle proteins such as SKP2 and AURKB, but not MCL1. In terms of tissue distribution, highly expressed in ovary and testes.

The protein resides in the cytoplasm. It catalyses the reaction Thiol-dependent hydrolysis of ester, thioester, amide, peptide and isopeptide bonds formed by the C-terminal Gly of ubiquitin (a 76-residue protein attached to proteins as an intracellular targeting signal).. With respect to regulation, specifically inhibited by spautin-1 (specific and potent autophagy inhibitor-1), a derivative of MBCQ that binds to USP13 and inhibits deubiquitinase activity. Regulated by PIK3C3/VPS34-containing complexes. The weak deubiquitinase activity in vitro suggests the existence of some mechanism that activates the enzyme. In terms of biological role, deubiquitinase that mediates deubiquitination of target proteins such as BECN1, MITF, SKP2 and USP10 and is involved in various processes such as autophagy, endoplasmic reticulum-associated degradation (ERAD), cell cycle progression or DNA damage response. Component of a regulatory loop that controls autophagy and p53/TP53 levels: mediates deubiquitination of BECN1, a key regulator of autophagy, leading to stabilize the PIK3C3/VPS34-containing complexes. Alternatively, forms with NEDD4 a deubiquitination complex, which subsequently stabilizes VPS34 to promote autophagy. Also deubiquitinates USP10, an essential regulator of p53/TP53 stability. In turn, PIK3C3/VPS34-containing complexes regulate USP13 stability, suggesting the existence of a regulatory system by which PIK3C3/VPS34-containing complexes regulate p53/TP53 protein levels via USP10 and USP13. Recruited by nuclear UFD1 and mediates deubiquitination of SKP2, thereby regulating endoplasmic reticulum-associated degradation (ERAD). Also regulates ERAD through the deubiquitination of UBL4A a component of the BAG6/BAT3 complex. Mediates stabilization of SIAH2 independently of deubiquitinase activity: binds ubiquitinated SIAH2 and acts by impairing SIAH2 autoubiquitination. Regulates the cell cycle progression by stabilizing cell cycle proteins such as SKP2 and AURKB. In addition, plays an important role in maintaining genomic stability and in DNA replication checkpoint activation via regulation of RAP80 and TOPBP1. Deubiquitinates the multifunctional protein HMGB1 and subsequently drives its nucleocytoplasmic localization and its secretion. Positively regulates type I and type II interferon signalings by deubiquitinating STAT1 but negatively regulates antiviral response by deubiquitinating STING1. In Homo sapiens (Human), this protein is Ubiquitin carboxyl-terminal hydrolase 13 (USP13).